We begin with the raw amino-acid sequence, 465 residues long: MAFNDDNFMLKNEAAKRLYQQIKDQPIFDYHCHLDPKEIFEDKVYDNIVDLWLGGDHYKWRLMRANGISEEEITGSASKLDKFKAFARTLQRSYGNPVYHWSVMELKNVFGVCELLTEDNAEEIYHRINAYLVEHQISPRKLIADSRVRFIGTTDHPLDDLAWHKRLTADDTFETVVAPTFRPDEAFIEHQRFADFVARLAQATGRTITDFKSFIAAMEERIAYFAENGCKASDISFTEIVFEAAEPEQLDRLMTRVLEGYQPQPLEIKQWQTAVFAELCRLYKHYGFVTQVHFGALRNNHSAIFNKLGADVGVDSLGDQAALAINMNRLLDHLVQRDSLPKMIWYNLNPSYNITVPNTLANFQANENGIAGYLQFGAGWWFADTKLGMISQMNALAEQGLLANFVGMLTDSRSFLSYQRHDYFRRILSTYLGEWIEEGEVPEDYQVLGSMAKDIAYNNAIQYFS.

The protein belongs to the metallo-dependent hydrolases superfamily. Uronate isomerase family.

It carries out the reaction D-glucuronate = D-fructuronate. It catalyses the reaction aldehydo-D-galacturonate = keto-D-tagaturonate. It functions in the pathway carbohydrate metabolism; pentose and glucuronate interconversion. This is Uronate isomerase from Streptococcus equi subsp. zooepidemicus (strain MGCS10565).